Consider the following 287-residue polypeptide: Cell wall protein PIR5 (287 aa).

A signal peptide spans 1-21 (MHYKKAFLASLLSSIALTAYA). The propeptide occupies 22–62 (PPEPWATLTPSSKMDGGTTEYRTSFGLAVIPFTVTESKVKR). PIR1/2/3 repeat units follow at residues 62-80 (RNVI…TQKL), 81-99 (PHPV…TQKV), 104-122 (SHIV…TAKN), and 144-162 (ATAV…ISSA).

This sequence belongs to the PIR protein family. In terms of processing, covalently linked to beta-1,3-glucan of the inner cell wall layer via an alkali-sensitive ester linkage between the gamma-carboxyl group of glutamic acids, arising from specific glutamines within the PIR1/2/3 repeats, and hydroxyl groups of glucoses of beta-1,3-glucan chains.

The protein resides in the secreted. It localises to the cell wall. Functionally, component of the outer cell wall layer. May be involved in meiosis and sporulation. This chain is Cell wall protein PIR5 (PIR5), found in Saccharomyces cerevisiae (strain RM11-1a) (Baker's yeast).